The chain runs to 521 residues: Bifunctional purine biosynthesis protein PurH (521 aa).

Residues methionine 1–valine 147 form the MGS-like domain.

It belongs to the PurH family.

It carries out the reaction (6R)-10-formyltetrahydrofolate + 5-amino-1-(5-phospho-beta-D-ribosyl)imidazole-4-carboxamide = 5-formamido-1-(5-phospho-D-ribosyl)imidazole-4-carboxamide + (6S)-5,6,7,8-tetrahydrofolate. It catalyses the reaction IMP + H2O = 5-formamido-1-(5-phospho-D-ribosyl)imidazole-4-carboxamide. It functions in the pathway purine metabolism; IMP biosynthesis via de novo pathway; 5-formamido-1-(5-phospho-D-ribosyl)imidazole-4-carboxamide from 5-amino-1-(5-phospho-D-ribosyl)imidazole-4-carboxamide (10-formyl THF route): step 1/1. It participates in purine metabolism; IMP biosynthesis via de novo pathway; IMP from 5-formamido-1-(5-phospho-D-ribosyl)imidazole-4-carboxamide: step 1/1. The chain is Bifunctional purine biosynthesis protein PurH from Acidithiobacillus ferrooxidans (strain ATCC 53993 / BNL-5-31) (Leptospirillum ferrooxidans (ATCC 53993)).